The chain runs to 571 residues: Cyclic di-GMP phosphodiesterase TpdA (571 aa).

Transmembrane regions (helical) follow at residues 155–175 (IAWV…YAIN), 321–341 (VYYI…FLVI), and 395–415 (TLIS…AIYA). An EAL domain is found at 344-571 (HRSLQAFITY…HQGYFYPLHF (228 aa)).

It localises to the cell inner membrane. The catalysed reaction is 3',3'-c-di-GMP + H2O = 5'-phosphoguanylyl(3'-&gt;5')guanosine + H(+). Its function is as follows. Cyclic di-GMP phosphodiesterase that plays an important role in modulating the global c-di-GMP pool. Its ability to alter the c-di-GMP pool has an effect on swimming motility, swarming motility and biofilm formation, multicellular behaviors that are important for the survival and dissemination of this environmental pathogen. Exhibits a dual function, namely, c-di-GMP degradation and modulation of its own expression. This chain is Cyclic di-GMP phosphodiesterase TpdA, found in Vibrio parahaemolyticus serotype O3:K6 (strain RIMD 2210633).